The chain runs to 232 residues: 5'-methylthioadenosine/S-adenosylhomocysteine nucleosidase (232 aa).

The active-site Proton acceptor is Glu12. Substrate contacts are provided by residues Gly78, Ile152, and Met173 to Glu174. Residue Asp197 is the Proton donor of the active site.

This sequence belongs to the PNP/UDP phosphorylase family. MtnN subfamily. As to quaternary structure, homodimer.

It carries out the reaction S-adenosyl-L-homocysteine + H2O = S-(5-deoxy-D-ribos-5-yl)-L-homocysteine + adenine. It catalyses the reaction S-methyl-5'-thioadenosine + H2O = 5-(methylsulfanyl)-D-ribose + adenine. The catalysed reaction is 5'-deoxyadenosine + H2O = 5-deoxy-D-ribose + adenine. Its pathway is amino-acid biosynthesis; L-methionine biosynthesis via salvage pathway; S-methyl-5-thio-alpha-D-ribose 1-phosphate from S-methyl-5'-thioadenosine (hydrolase route): step 1/2. Functionally, catalyzes the irreversible cleavage of the glycosidic bond in both 5'-methylthioadenosine (MTA) and S-adenosylhomocysteine (SAH/AdoHcy) to adenine and the corresponding thioribose, 5'-methylthioribose and S-ribosylhomocysteine, respectively. Also cleaves 5'-deoxyadenosine, a toxic by-product of radical S-adenosylmethionine (SAM) enzymes, into 5-deoxyribose and adenine. Thus, is required for in vivo function of the radical SAM enzymes biotin synthase and lipoic acid synthase, that are inhibited by 5'-deoxyadenosine accumulation. This Citrobacter koseri (strain ATCC BAA-895 / CDC 4225-83 / SGSC4696) protein is 5'-methylthioadenosine/S-adenosylhomocysteine nucleosidase.